A 387-amino-acid polypeptide reads, in one-letter code: Phosphoglycerate kinase (387 aa).

Substrate contacts are provided by residues 21–23 (DLN), arginine 36, 59–62 (HLGR), arginine 113, and arginine 146. ATP is bound by residues lysine 197, glutamate 314, and 340-343 (GGDT).

Belongs to the phosphoglycerate kinase family. In terms of assembly, monomer.

The protein resides in the cytoplasm. The enzyme catalyses (2R)-3-phosphoglycerate + ATP = (2R)-3-phospho-glyceroyl phosphate + ADP. The protein operates within carbohydrate degradation; glycolysis; pyruvate from D-glyceraldehyde 3-phosphate: step 2/5. The sequence is that of Phosphoglycerate kinase from Aeromonas salmonicida (strain A449).